The sequence spans 390 residues: MPLRFTKLTVEKKQVMKESHYLTAQPANHDKKVIVGMSGGVDSSVSALILMQQGYQVEGLFMKNWDEDDGTEYCTAKDDLADAQAVSDKLGIKLHTANFASEYWDNVFEHFLAEYKAGRTPNPDILCNKEIKFKAFLEYAMALNADYIATGHYVRRGEKNGEPLLLKGLDGNKDQSYFLYAVGKDEIAKTLFPVGELEKTEVRRLAEEFGLITHNKKDSTGICFIGERRFKDFLEQYLPAQPGDIETLEGDKIARHHGLMYHTIGQRQGLGIGGLAKYSDDPWYVVEKDLERNVLIVTQGGQHESLFKTHLIADNFDWVAREKPTFPLTCKAKCRYRQSDQECTINELADGRVEVSFVEPQRAVTPGQSVVFYVDDVCLGGGIINVAFNK.

ATP contacts are provided by residues 36–43 (GMSGGVDS) and M62. Residues 122–124 (NPD) are interaction with target base in tRNA. Catalysis depends on C127, which acts as the Nucleophile. A disulfide bridge connects residues C127 and C223. Position 151 (G151) interacts with ATP. The segment at 173-175 (KDQ) is interaction with tRNA. The active-site Cysteine persulfide intermediate is C223. Residues 335-336 (RY) form an interaction with tRNA region.

It belongs to the MnmA/TRMU family.

Its subcellular location is the cytoplasm. The catalysed reaction is S-sulfanyl-L-cysteinyl-[protein] + uridine(34) in tRNA + AH2 + ATP = 2-thiouridine(34) in tRNA + L-cysteinyl-[protein] + A + AMP + diphosphate + H(+). Functionally, catalyzes the 2-thiolation of uridine at the wobble position (U34) of tRNA, leading to the formation of s(2)U34. This is tRNA-specific 2-thiouridylase MnmA from Marinomonas sp. (strain MWYL1).